A 61-amino-acid polypeptide reads, in one-letter code: Large ribosomal subunit protein bL32 (61 aa).

This sequence belongs to the bacterial ribosomal protein bL32 family.

The protein is Large ribosomal subunit protein bL32 of Phytoplasma mali (strain AT).